Reading from the N-terminus, the 284-residue chain is MDSIKKKMMAMKLEKENALEKAINLENQLKEKAKDFEKKEEEMNDWLSKVKNIQTEVDTVQESLQEAISKLEETEKRATNAEAEVAAMTRRIRLLEEDFEQSSGRLTETSTKLDDASKAAEESERNRKTLETRSISDDERMAQLEEQVKEAKYIAEDAERKYDEAARRLAVTEVDLERAESRLETSESKIVELEEELRIVGNNMKSLEVSEQESLQREESYEETIRDLTERLKTAEQRAAEAERQVSKLQNEVDRLEDELLSEKERYRAISGELDTTFAELTSF.

Positions 1 to 284 form a coiled coil; that stretch reads MDSIKKKMMA…DTTFAELTSF (284 aa). The interval 97-140 is disordered; it reads EDFEQSSGRLTETSTKLDDASKAAEESERNRKTLETRSISDDER. Over residues 101 to 110 the composition is skewed to polar residues; sequence QSSGRLTETS. Residues 111 to 140 show a composition bias toward basic and acidic residues; that stretch reads TKLDDASKAAEESERNRKTLETRSISDDER.

This sequence belongs to the tropomyosin family. As to quaternary structure, homodimer.

Its function is as follows. Tropomyosin, in association with the troponin complex, plays a central role in the calcium dependent regulation of muscle contraction. This chain is Tropomyosin, found in Echinococcus multilocularis (Fox tapeworm).